The following is a 266-amino-acid chain: Undecaprenyl-diphosphatase (266 aa).

Transmembrane regions (helical) follow at residues 1 to 21 (MTWL…FLPI), 39 to 59 (QGLA…MVYF), 87 to 107 (WAVI…DSWI), 111 to 131 (LRSA…LGMA), 143 to 163 (FTLK…IPGT), 186 to 206 (FSFL…GLEL), 217 to 237 (EIAG…HLFL), and 243 to 263 (IGFM…LVWL).

This sequence belongs to the UppP family.

It is found in the cell inner membrane. It carries out the reaction di-trans,octa-cis-undecaprenyl diphosphate + H2O = di-trans,octa-cis-undecaprenyl phosphate + phosphate + H(+). Catalyzes the dephosphorylation of undecaprenyl diphosphate (UPP). Confers resistance to bacitracin. This is Undecaprenyl-diphosphatase from Hahella chejuensis (strain KCTC 2396).